The chain runs to 211 residues: SAGA-associated factor 11 homolog (211 aa).

The SGF11-type zinc-finger motif lies at 115 to 136 (CTCPHCDRLVAAARFAPHLEKC). Residues 153 to 211 (TKEGASASSSSTSTYIQSGGNTGGTDDEDDVDWSSDKRKKKSTQNSRNNGSKKNNGKIF) are disordered. Residues 157–166 (ASASSSSTST) show a composition bias toward low complexity. At S187 the chain carries Phosphoserine. Residues 197 to 211 (NSRNNGSKKNNGKIF) are compositionally biased toward low complexity.

The protein belongs to the SGF11 family. In terms of assembly, component of some SAGA transcription coactivator-HAT complexes, at least composed of Ada2b, not/nonstop, Pcaf/Gcn5, Sgf11 and Spt3. Within the SAGA complex, Sgf11, e(y)2, and not/nonstop form an additional subcomplex of SAGA called the DUB module (deubiquitination module). Interacts directly with not/nonstop. Interacts with the AMEX complex component xmas-2. Interacts with Cbp80; important for promoter recruitment of Sgf11 that is not associated with the DUB module.

Its subcellular location is the nucleus. It localises to the nucleoplasm. The protein resides in the cytoplasm. Functionally, component of the transcription regulatory histone acetylation (HAT) complex SAGA, a multiprotein complex that activates transcription by remodeling chromatin and mediating histone acetylation and deubiquitination. Within the SAGA complex, participates in a subcomplex that specifically deubiquitinates histone H2B. The SAGA complex is recruited to specific gene promoters by activators, where it is required for transcription. Required for nuclear receptor-mediated transactivation. Binds independently on SAGA to promoters in an RNA-dependent manner. Binds to mRNA and is essential for total mRNA export from the nucleus. Required to counteract heterochromatin silencing. Controls the development of neuronal connectivity in visual system by being required for accurate axon targeting in the optic lobe. Required for expression of ecdysone-induced genes such as br/broad. The sequence is that of SAGA-associated factor 11 homolog from Drosophila mojavensis (Fruit fly).